Consider the following 365-residue polypeptide: Probable dual-specificity RNA methyltransferase RlmN (365 aa).

Glu99 (proton acceptor) is an active-site residue. Residues 105–344 enclose the Radical SAM core domain; that stretch reads QSYGLSVCVT…CVVRQEHGTD (240 aa). A disulfide bond links Cys112 and Cys349. Cys119, Cys123, and Cys126 together coordinate [4Fe-4S] cluster. S-adenosyl-L-methionine-binding positions include 171–172, Ser203, 227–229, and Asn305; these read GE and SLH. Cys349 acts as the S-methylcysteine intermediate in catalysis.

The protein belongs to the radical SAM superfamily. RlmN family. It depends on [4Fe-4S] cluster as a cofactor.

It is found in the cytoplasm. It carries out the reaction adenosine(2503) in 23S rRNA + 2 reduced [2Fe-2S]-[ferredoxin] + 2 S-adenosyl-L-methionine = 2-methyladenosine(2503) in 23S rRNA + 5'-deoxyadenosine + L-methionine + 2 oxidized [2Fe-2S]-[ferredoxin] + S-adenosyl-L-homocysteine. The catalysed reaction is adenosine(37) in tRNA + 2 reduced [2Fe-2S]-[ferredoxin] + 2 S-adenosyl-L-methionine = 2-methyladenosine(37) in tRNA + 5'-deoxyadenosine + L-methionine + 2 oxidized [2Fe-2S]-[ferredoxin] + S-adenosyl-L-homocysteine. Its function is as follows. Specifically methylates position 2 of adenine 2503 in 23S rRNA and position 2 of adenine 37 in tRNAs. The protein is Probable dual-specificity RNA methyltransferase RlmN of Lactococcus lactis subsp. cremoris (strain MG1363).